A 367-amino-acid chain; its full sequence is Multifunctional tryptophan biosynthesis protein (367 aa).

One can recognise a Glutamine amidotransferase type-1 domain in the interval 7-201 (NVVMIDNYDS…LNVSGGYWEE (195 aa)). Residue 58–60 (GPG) participates in L-glutamine binding. Cys-86 (nucleophile; for GATase activity) is an active-site residue. L-glutamine is bound by residues Gln-90 and 136 to 137 (SL). Catalysis depends on for GATase activity residues His-175 and Glu-177. Positions 209–367 (RKESILEKIY…TVLLIVKMLS (159 aa)) are indole-3-glycerol phosphate synthase.

Tetramer of two components I and two components II.

It carries out the reaction chorismate + L-glutamine = anthranilate + pyruvate + L-glutamate + H(+). The enzyme catalyses 1-(2-carboxyphenylamino)-1-deoxy-D-ribulose 5-phosphate + H(+) = (1S,2R)-1-C-(indol-3-yl)glycerol 3-phosphate + CO2 + H2O. It participates in amino-acid biosynthesis; L-tryptophan biosynthesis; L-tryptophan from chorismate: step 1/5. Its pathway is amino-acid biosynthesis; L-tryptophan biosynthesis; L-tryptophan from chorismate: step 4/5. The chain is Multifunctional tryptophan biosynthesis protein from Pichia angusta (Yeast).